The primary structure comprises 651 residues: MAVDDYEELLKYYELHETVGTGGFAKVKLASHLITGEKVAIKIMDKESLGDDLPRVKTEIDAMKNLSHQHVCRLYHVIETPKKIFMVLEYCPGGELFDYIIAKDRLTEEEARVFFRQIVSAVAYIHSQGYAHRDLKPENLLIDEDQNLKLIDFGLCAKPKGGLDYHLMTCCGSPAYAAPELIQGKAYIGSEADIWSMGVLMYALMCGYLPFDDDNVMVLYKKIMRGKYEIPKWLSPGSVLLLSQMMQVDPKKRITVKHLLNHPWLMHGYSCPVEWQSKYPLGYIDEDCVTELSVFYKYSRTSTTRLISEWSYDHITASYLLLHSKKSHGKAVRLKHPLAVGDQAVTSFKELRPKSKLDFEEPNGEIAYVFGSMDFSDEELFSEDFTYSSFEPHTPKEYVKGRLEFNSVDSAPATPVVQRNARHKNEDKENSNTAVARDENVFLHPAPWTPTPRRKQNEKKGILTTPNKNTQTKEKNQSKETPTKKPIGTGEEFANVISPERRCRSVELDLNQAHIDSAQKKKGAKVFGSLERGLDKMITMLTPSKRKGYTREGPRKLRAHYNVTTTNIVNPEQLLNQIVRVLPSKNVDYVQKGYTLKCKTQSDFGKVTMQFELEVCQLSKSEVVGIRRQRLKGDAWVYKRLVEDILSSCKV.

A Protein kinase domain is found at 13–265 (YELHETVGTG…VKHLLNHPWL (253 aa)). Residues 19–27 (VGTGGFAKV) and lysine 42 each bind ATP. Aspartate 134 serves as the catalytic Proton acceptor. A Phosphothreonine; by autocatalysis modification is found at threonine 169. Serine 173 is modified (phosphoserine; by autocatalysis). The UBA-like stretch occupies residues 284–323 (IDEDCVTELSVFYKYSRTSTTRLISEWSYDHITASYLLLH). The interval 328–651 (HGKAVRLKHP…VEDILSSCKV (324 aa)) is autoinhibitory region. The segment at 410–490 (SAPATPVVQR…TPTKKPIGTG (81 aa)) is disordered. A Phosphothreonine modification is found at threonine 414. Basic and acidic residues predominate over residues 423–441 (HKNEDKENSNTAVARDENV). Threonine 449, threonine 451, threonine 481, and threonine 483 each carry phosphothreonine. The segment covering 471 to 483 (QTKEKNQSKETPT) has biased composition (basic and acidic residues). Phosphoserine occurs at positions 498, 505, and 517. In terms of domain architecture, KA1 spans 602 to 651 (SDFGKVTMQFELEVCQLSKSEVVGIRRQRLKGDAWVYKRLVEDILSSCKV).

It belongs to the protein kinase superfamily. CAMK Ser/Thr protein kinase family. SNF1 subfamily. Autophosphorylated: autophosphorylation of the T-loop at Thr-169 and Ser-173 is required for activation. Phosphorylated by the maturation promoting factor (MPF), composed of cdk1 and a cyclin-B. Also phosphorylated by some MAPK. Phosphorylated during oocyte maturation. Dephosphorylation destabilizes the protein. There is some ambiguity for some phosphosites: Thr-481/Thr-483 and Ser-505/Ser-517. Post-translationally, degraded when cells exit mitosis.

Its subcellular location is the cell membrane. It catalyses the reaction L-seryl-[protein] + ATP = O-phospho-L-seryl-[protein] + ADP + H(+). The catalysed reaction is L-threonyl-[protein] + ATP = O-phospho-L-threonyl-[protein] + ADP + H(+). Activated by autophosphorylation of the T-loop at Thr-169 and Ser-173: in contrast to other members of the SNF1 subfamily, phosphorylation at Thr-169 is not mediated by STK11/LKB1 but via autophosphorylation instead. Its function is as follows. Serine/threonine-protein kinase involved in various processes such as cell cycle regulation, self-renewal of stem cells, apoptosis and splicing regulation. Also plays a role in primitive hematopoiesis, possibly by affecting the expression of genes critical for hematopoiesis. Plays a role in cytokinesis during early development. The protein is Maternal embryonic leucine zipper kinase (melk) of Xenopus laevis (African clawed frog).